The chain runs to 708 residues: Serine/threonine-protein kinase Nek5 (708 aa).

The Protein kinase domain maps to Tyr4 to Leu259. Residues Ile10 to Ala18 and Lys33 contribute to the ATP site. Asp128 serves as the catalytic Proton acceptor. Disordered stretches follow at residues Ser376–Trp403 and Lys423–Leu454. Residues Gln440–Leu454 are compositionally biased toward basic and acidic residues.

It belongs to the protein kinase superfamily. NEK Ser/Thr protein kinase family. NIMA subfamily. The cofactor is Mg(2+).

The protein localises to the cell projection. Its subcellular location is the cilium. It localises to the flagellum. It carries out the reaction L-seryl-[protein] + ATP = O-phospho-L-seryl-[protein] + ADP + H(+). It catalyses the reaction L-threonyl-[protein] + ATP = O-phospho-L-threonyl-[protein] + ADP + H(+). In Homo sapiens (Human), this protein is Serine/threonine-protein kinase Nek5 (NEK5).